The primary structure comprises 365 residues: Methylthioribose-1-phosphate isomerase (365 aa).

Substrate-binding positions include 53–55 (RGA), Arg-90, and Gln-201. Asp-242 (proton donor) is an active-site residue. 252–253 (NK) is a substrate binding site.

The protein belongs to the eIF-2B alpha/beta/delta subunits family. MtnA subfamily.

The catalysed reaction is 5-(methylsulfanyl)-alpha-D-ribose 1-phosphate = 5-(methylsulfanyl)-D-ribulose 1-phosphate. It functions in the pathway amino-acid biosynthesis; L-methionine biosynthesis via salvage pathway; L-methionine from S-methyl-5-thio-alpha-D-ribose 1-phosphate: step 1/6. Its function is as follows. Catalyzes the interconversion of methylthioribose-1-phosphate (MTR-1-P) into methylthioribulose-1-phosphate (MTRu-1-P). This chain is Methylthioribose-1-phosphate isomerase, found in Methylorubrum populi (strain ATCC BAA-705 / NCIMB 13946 / BJ001) (Methylobacterium populi).